The primary structure comprises 647 residues: Chaperone protein DnaK (647 aa).

T200 is modified (phosphothreonine; by autocatalysis). Residues 611 to 631 show a composition bias toward low complexity; it reads AGEQGAAGAAGAGAQQQAQPQ. Positions 611-647 are disordered; it reads AGEQGAAGAAGAGAQQQAQPQDDNVVDAEFKEVNDKK. Over residues 638–647 the composition is skewed to basic and acidic residues; it reads AEFKEVNDKK.

The protein belongs to the heat shock protein 70 family.

Acts as a chaperone. In Cupriavidus taiwanensis (strain DSM 17343 / BCRC 17206 / CCUG 44338 / CIP 107171 / LMG 19424 / R1) (Ralstonia taiwanensis (strain LMG 19424)), this protein is Chaperone protein DnaK.